Reading from the N-terminus, the 497-residue chain is Serine hydroxymethyltransferase (497 aa).

Residues Leu-176 and 180-182 (GHL) each bind (6S)-5,6,7,8-tetrahydrofolate. Position 289 is an N6-(pyridoxal phosphate)lysine (Lys-289).

This sequence belongs to the SHMT family. Homodimer. The cofactor is pyridoxal 5'-phosphate.

It is found in the cytoplasm. It catalyses the reaction (6R)-5,10-methylene-5,6,7,8-tetrahydrofolate + glycine + H2O = (6S)-5,6,7,8-tetrahydrofolate + L-serine. It functions in the pathway one-carbon metabolism; tetrahydrofolate interconversion. It participates in amino-acid biosynthesis; glycine biosynthesis; glycine from L-serine: step 1/1. Functionally, catalyzes the reversible interconversion of serine and glycine with tetrahydrofolate (THF) serving as the one-carbon carrier. This reaction serves as the major source of one-carbon groups required for the biosynthesis of purines, thymidylate, methionine, and other important biomolecules. Also exhibits THF-independent aldolase activity toward beta-hydroxyamino acids, producing glycine and aldehydes, via a retro-aldol mechanism. In Chlamydia trachomatis serovar L2b (strain UCH-1/proctitis), this protein is Serine hydroxymethyltransferase.